A 477-amino-acid chain; its full sequence is UDP-N-acetylmuramate--L-alanine ligase (477 aa).

112–118 (GTHGKTT) is a binding site for ATP.

It belongs to the MurCDEF family.

It is found in the cytoplasm. The catalysed reaction is UDP-N-acetyl-alpha-D-muramate + L-alanine + ATP = UDP-N-acetyl-alpha-D-muramoyl-L-alanine + ADP + phosphate + H(+). The protein operates within cell wall biogenesis; peptidoglycan biosynthesis. Cell wall formation. This is UDP-N-acetylmuramate--L-alanine ligase from Verminephrobacter eiseniae (strain EF01-2).